The chain runs to 275 residues: Lincomycin biosynthesis protein LmbN (275 aa).

In terms of domain architecture, Carrier spans 1-78; it reads MSTLDEVLAL…AIAATVARIT (78 aa). Ser-37 bears the O-(pantetheine 4'-phosphoryl)serine mark. Residues 113 to 275 form the SIS domain; it reads LFDTWHAGGT…HHALCVAHAP (163 aa).

Its pathway is antibiotic biosynthesis; lincomycin biosynthesis. This chain is Lincomycin biosynthesis protein LmbN (lmbN), found in Streptomyces lincolnensis.